Reading from the N-terminus, the 157-residue chain is MGLPTDFKELQIPGYVLKTLYVIGFFRDMVDALCPYIGLPSFLDHNETSRSDPTRLALSTSATLANELIPVVRFSDLLTDPEDCCTVCLSDFVSDDKIRQLPKCGHVFHHRCLDRWIVDCNKITCPICRNRFLPEEKSTPFDWGTSDWFRDEVESTN.

An RING-type; atypical zinc finger spans residues 85–129 (CTVCLSDFVSDDKIRQLPKCGHVFHHRCLDRWIVDCNKITCPICR).

The catalysed reaction is S-ubiquitinyl-[E2 ubiquitin-conjugating enzyme]-L-cysteine + [acceptor protein]-L-lysine = [E2 ubiquitin-conjugating enzyme]-L-cysteine + N(6)-ubiquitinyl-[acceptor protein]-L-lysine.. It participates in protein modification; protein ubiquitination. Possesses E3 ubiquitin-protein ligase activity when associated with the E2 enzyme UBC8 in vitro. The chain is E3 ubiquitin-protein ligase RHA1B from Arabidopsis thaliana (Mouse-ear cress).